The primary structure comprises 433 residues: Homogentisate 1,2-dioxygenase (433 aa).

His288 functions as the Proton acceptor in the catalytic mechanism. Residues His331 and Glu337 each contribute to the Fe cation site. Homogentisate is bound by residues Tyr346 and His367. A Fe cation-binding site is contributed by His367.

It belongs to the homogentisate dioxygenase family. In terms of assembly, hexamer; dimer of trimers. Fe cation is required as a cofactor.

The enzyme catalyses homogentisate + O2 = 4-maleylacetoacetate + H(+). It participates in amino-acid degradation; L-phenylalanine degradation; acetoacetate and fumarate from L-phenylalanine: step 4/6. Its function is as follows. Involved in the catabolism of homogentisate (2,5-dihydroxyphenylacetate or 2,5-OH-PhAc), a central intermediate in the degradation of phenylalanine and tyrosine. Catalyzes the oxidative ring cleavage of the aromatic ring of homogentisate to yield maleylacetoacetate. In Pseudomonas putida (strain GB-1), this protein is Homogentisate 1,2-dioxygenase.